The sequence spans 264 residues: tRNA pseudouridine synthase A (264 aa).

Asp51 (nucleophile) is an active-site residue. Residue Tyr109 participates in substrate binding.

The protein belongs to the tRNA pseudouridine synthase TruA family. In terms of assembly, homodimer.

It carries out the reaction uridine(38/39/40) in tRNA = pseudouridine(38/39/40) in tRNA. In terms of biological role, formation of pseudouridine at positions 38, 39 and 40 in the anticodon stem and loop of transfer RNAs. This is tRNA pseudouridine synthase A from Vibrio campbellii (strain ATCC BAA-1116).